The primary structure comprises 340 residues: Uroporphyrinogen decarboxylase (340 aa).

Substrate-binding positions include 21-25 (RQAGR), D71, Y147, S202, and H315.

The protein belongs to the uroporphyrinogen decarboxylase family. Homodimer.

The protein resides in the cytoplasm. It carries out the reaction uroporphyrinogen III + 4 H(+) = coproporphyrinogen III + 4 CO2. Its pathway is porphyrin-containing compound metabolism; protoporphyrin-IX biosynthesis; coproporphyrinogen-III from 5-aminolevulinate: step 4/4. In terms of biological role, catalyzes the decarboxylation of four acetate groups of uroporphyrinogen-III to yield coproporphyrinogen-III. The polypeptide is Uroporphyrinogen decarboxylase (Nautilia profundicola (strain ATCC BAA-1463 / DSM 18972 / AmH)).